A 475-amino-acid polypeptide reads, in one-letter code: ATP synthase subunit beta (475 aa).

Residue 153–160 participates in ATP binding; that stretch reads GGAGVGKT.

The protein belongs to the ATPase alpha/beta chains family. F-type ATPases have 2 components, CF(1) - the catalytic core - and CF(0) - the membrane proton channel. CF(1) has five subunits: alpha(3), beta(3), gamma(1), delta(1), epsilon(1). CF(0) has three main subunits: a(1), b(2) and c(9-12). The alpha and beta chains form an alternating ring which encloses part of the gamma chain. CF(1) is attached to CF(0) by a central stalk formed by the gamma and epsilon chains, while a peripheral stalk is formed by the delta and b chains.

It is found in the cell membrane. It catalyses the reaction ATP + H2O + 4 H(+)(in) = ADP + phosphate + 5 H(+)(out). Functionally, produces ATP from ADP in the presence of a proton gradient across the membrane. The catalytic sites are hosted primarily by the beta subunits. This is ATP synthase subunit beta from Limosilactobacillus reuteri (strain DSM 20016) (Lactobacillus reuteri).